The chain runs to 393 residues: Phosphoglycerate kinase (393 aa).

Substrate contacts are provided by residues 21-23, Arg37, 60-63, Arg119, and Arg152; these read DFN and HLGR. ATP is bound by residues Lys202, Glu323, and 349–352; that span reads GGDT.

It belongs to the phosphoglycerate kinase family. In terms of assembly, monomer.

Its subcellular location is the cytoplasm. The enzyme catalyses (2R)-3-phosphoglycerate + ATP = (2R)-3-phospho-glyceroyl phosphate + ADP. The protein operates within carbohydrate degradation; glycolysis; pyruvate from D-glyceraldehyde 3-phosphate: step 2/5. The protein is Phosphoglycerate kinase of Desulforudis audaxviator (strain MP104C).